The chain runs to 353 residues: Heterogeneous nuclear ribonucleoprotein D0 (353 aa).

A disordered region spans residues 1-89 (MSEEQFGGDG…SSPRHTEAAT (89 aa)). Residue serine 2 is modified to N-acetylserine. A compositionally biased stretch (low complexity) spans 11–42 (AAAAATAAVGGSAGEQEGAMVAAAQGAAAAAG). The span at 43 to 56 (SGSGGGSAPGGTEG) shows a compositional bias: gly residues. The span at 62 to 71 (EGAKIDASKN) shows a compositional bias: basic and acidic residues. Serine 69 is subject to Phosphoserine. Lysine 70 participates in a covalent cross-link: Glycyl lysine isopeptide (Lys-Gly) (interchain with G-Cter in SUMO2). Phosphoserine is present on residues serine 78, serine 80, and serine 81. Threonine 89 carries the post-translational modification Phosphothreonine. 2 consecutive RRM domains span residues 95–177 (WKMF…KTKE) and 180–259 (KKIF…MSKE). Lysine 117 bears the N6-methyllysine mark. Threonine 125 bears the Phosphothreonine mark. A Glycyl lysine isopeptide (Lys-Gly) (interchain with G-Cter in SUMO2) cross-link involves residue lysine 127. Lysine 163 carries the post-translational modification N6-acetyllysine. The residue at position 188 (serine 188) is a Phosphoserine. Threonine 191 is subject to Phosphothreonine. Lysine 195 participates in a covalent cross-link: Glycyl lysine isopeptide (Lys-Gly) (interchain with G-Cter in SUMO2). N6-acetyllysine is present on residues lysine 241 and lysine 249. Serine 269 is modified (phosphoserine). Arginine 270, arginine 276, arginine 278, and arginine 280 each carry omega-N-methylarginine. Arginine 343 is modified (asymmetric dimethylarginine; alternate). At arginine 343 the chain carries Dimethylated arginine; alternate. Omega-N-methylarginine; alternate is present on arginine 343.

As to quaternary structure, identified in a IGF2BP1-dependent mRNP granule complex containing untranslated mRNAs. Part of a complex associated with the FOS mCRD domain and consisting of PABPC1, PAIP1, CSDE1/UNR and SYNCRIP. Interacts with IGF2BP2. Interacts with GTPBP1. Interacts with EIF4G1; the interaction requires RNA. Interacts with EIF3B and RPS3. Post-translationally, methylated by PRMT1, in an insulin-dependent manner. The PRMT1-mediated methylation regulates its phosphorylation. Arg-343 is dimethylated, probably to asymmetric dimethylarginine.

It is found in the nucleus. The protein localises to the cytoplasm. Its function is as follows. Binds with high affinity to RNA molecules that contain AU-rich elements (AREs) found within the 3'-UTR of many proto-oncogenes and cytokine mRNAs. Also binds to double- and single-stranded DNA sequences in a specific manner and functions a transcription factor. Each of the RNA-binding domains specifically can bind solely to a single-stranded non-monotonous 5'-UUAG-3' sequence and also weaker to the single-stranded 5'-TTAGGG-3' telomeric DNA repeat. Binds RNA oligonucleotides with 5'-UUAGGG-3' repeats more tightly than the telomeric single-stranded DNA 5'-TTAGGG-3' repeats. Binding of RRM1 to DNA inhibits the formation of DNA quadruplex structure which may play a role in telomere elongation. May be involved in translationally coupled mRNA turnover. Implicated with other RNA-binding proteins in the cytoplasmic deadenylation/translational and decay interplay of the FOS mRNA mediated by the major coding-region determinant of instability (mCRD) domain. May play a role in the regulation of the rhythmic expression of circadian clock core genes. Directly binds to the 3'UTR of CRY1 mRNA and induces CRY1 rhythmic translation. May also be involved in the regulation of PER2 translation. The sequence is that of Heterogeneous nuclear ribonucleoprotein D0 (Hnrnpd) from Rattus norvegicus (Rat).